The chain runs to 173 residues: Bifunctional protein PyrR (173 aa).

The PRPP-binding signature appears at 93-105 (VILVDDVLYTGRT).

The protein belongs to the purine/pyrimidine phosphoribosyltransferase family. PyrR subfamily. Homodimer and homohexamer; in equilibrium.

It carries out the reaction UMP + diphosphate = 5-phospho-alpha-D-ribose 1-diphosphate + uracil. Functionally, regulates transcriptional attenuation of the pyrimidine nucleotide (pyr) operon by binding in a uridine-dependent manner to specific sites on pyr mRNA. This disrupts an antiterminator hairpin in the RNA and favors formation of a downstream transcription terminator, leading to a reduced expression of downstream genes. In terms of biological role, also displays a weak uracil phosphoribosyltransferase activity which is not physiologically significant. The polypeptide is Bifunctional protein PyrR (Streptococcus uberis (strain ATCC BAA-854 / 0140J)).